The primary structure comprises 401 residues: Phosphoglycerate kinase (401 aa).

Substrate contacts are provided by residues 23 to 25, Arg38, 61 to 64, Arg120, and Arg153; these read DLN and HFGR. Residues Lys203, Glu325, and 355 to 358 each bind ATP; that span reads GGDT.

This sequence belongs to the phosphoglycerate kinase family. Monomer.

It localises to the cytoplasm. It carries out the reaction (2R)-3-phosphoglycerate + ATP = (2R)-3-phospho-glyceroyl phosphate + ADP. It participates in carbohydrate degradation; glycolysis; pyruvate from D-glyceraldehyde 3-phosphate: step 2/5. In Rhizobium johnstonii (strain DSM 114642 / LMG 32736 / 3841) (Rhizobium leguminosarum bv. viciae), this protein is Phosphoglycerate kinase.